We begin with the raw amino-acid sequence, 383 residues long: 8-amino-7-oxononanoate synthase (383 aa).

R21 provides a ligand contact to substrate. 108-109 (GY) serves as a coordination point for pyridoxal 5'-phosphate. Substrate is bound at residue H133. Pyridoxal 5'-phosphate-binding residues include S179, H207, and T233. N6-(pyridoxal phosphate)lysine is present on K236. T350 serves as a coordination point for substrate.

Belongs to the class-II pyridoxal-phosphate-dependent aminotransferase family. BioF subfamily. As to quaternary structure, homodimer. It depends on pyridoxal 5'-phosphate as a cofactor.

It carries out the reaction 6-carboxyhexanoyl-[ACP] + L-alanine + H(+) = (8S)-8-amino-7-oxononanoate + holo-[ACP] + CO2. Its pathway is cofactor biosynthesis; biotin biosynthesis. Its function is as follows. Catalyzes the decarboxylative condensation of pimeloyl-[acyl-carrier protein] and L-alanine to produce 8-amino-7-oxononanoate (AON), [acyl-carrier protein], and carbon dioxide. This is 8-amino-7-oxononanoate synthase from Yersinia pestis bv. Antiqua (strain Angola).